We begin with the raw amino-acid sequence, 62 residues long: Photosystem II reaction center protein Z (62 aa).

2 helical membrane passes run 8 to 28 and 41 to 61; these read AVFA…LVFA and FSGT…NSLI.

This sequence belongs to the PsbZ family. PSII is composed of 1 copy each of membrane proteins PsbA, PsbB, PsbC, PsbD, PsbE, PsbF, PsbH, PsbI, PsbJ, PsbK, PsbL, PsbM, PsbT, PsbY, PsbZ, Psb30/Ycf12, at least 3 peripheral proteins of the oxygen-evolving complex and a large number of cofactors. It forms dimeric complexes.

The protein resides in the plastid. Its subcellular location is the chloroplast thylakoid membrane. Its function is as follows. May control the interaction of photosystem II (PSII) cores with the light-harvesting antenna, regulates electron flow through the 2 photosystem reaction centers. PSII is a light-driven water plastoquinone oxidoreductase, using light energy to abstract electrons from H(2)O, generating a proton gradient subsequently used for ATP formation. The polypeptide is Photosystem II reaction center protein Z (Oryza nivara (Indian wild rice)).